A 172-amino-acid chain; its full sequence is Small ribosomal subunit protein uS5 (172 aa).

The S5 DRBM domain maps to 7 to 70 (VVEHLVNVNR…QNAKKYMIEV (64 aa)).

Belongs to the universal ribosomal protein uS5 family. In terms of assembly, part of the 30S ribosomal subunit. Contacts proteins S4 and S8.

Its function is as follows. With S4 and S12 plays an important role in translational accuracy. Located at the back of the 30S subunit body where it stabilizes the conformation of the head with respect to the body. The protein is Small ribosomal subunit protein uS5 of Orientia tsutsugamushi (strain Boryong) (Rickettsia tsutsugamushi).